Reading from the N-terminus, the 270-residue chain is Bis(5'-nucleosyl)-tetraphosphatase, symmetrical (270 aa).

This sequence belongs to the Ap4A hydrolase family.

It catalyses the reaction P(1),P(4)-bis(5'-adenosyl) tetraphosphate + H2O = 2 ADP + 2 H(+). Its function is as follows. Hydrolyzes diadenosine 5',5'''-P1,P4-tetraphosphate to yield ADP. The chain is Bis(5'-nucleosyl)-tetraphosphatase, symmetrical from Cellvibrio japonicus (strain Ueda107) (Pseudomonas fluorescens subsp. cellulosa).